A 317-amino-acid chain; its full sequence is AT-hook motif nuclear-localized protein 22 (317 aa).

Disordered stretches follow at residues 22–41 (HHQF…HDID) and 48–106 (LKRD…KPPI). Over residues 26–35 (QHQQQQQQQN) the composition is skewed to low complexity. Over residues 48–64 (LKRDRDADIDPNEHSSA) the composition is skewed to basic and acidic residues. Over residues 72 to 84 (GSGGESGGGGGGD) the composition is skewed to gly residues. The a.T hook DNA-binding region spans 89-101 (RRPRGRPAGSKNK). The region spanning 113–253 (ANALKSHVME…EDDQEEQTAG (141 aa)) is the PPC domain. The tract at residues 258–285 (NIDGNATMGGGTQTQTQTQQQQQQQLMQ) is disordered. Over residues 270 to 282 (QTQTQTQQQQQQQ) the composition is skewed to low complexity.

As to quaternary structure, homodimer. Interacts with HDA1/HDA19, HDA6 and HDA9. Expressed at the hypocotyl-root transition zone and the root hair zone. Also detected in the inflorescence.

It localises to the nucleus. Transcription factor that specifically binds AT-rich DNA sequences related to the nuclear matrix attachment regions (MARs). Binds an AT-rich DNA sequences in the FLOWERING LOCUS T (FT) promoter. Acts redundantly with AHL18, AHL27 and AHL29 in the regulation of flowering and regulation of the hypocotyl elongation. Plays a role in both photo- and skotomorphogenesis. Acts as a chromatin remodeling factor that modifies the architecture of FLOWERING LOCUS T (FT) chromatin by modulating both H3 acetylation and methylation leading to the regulation of FT expression during flowering induction. The polypeptide is AT-hook motif nuclear-localized protein 22 (Arabidopsis thaliana (Mouse-ear cress)).